A 591-amino-acid chain; its full sequence is Developmental and secondary metabolism regulator VEA1 (591 aa).

Positions 1-22 (MATKASSILHPPNETEHTMSRI) are disordered. The span at 13-22 (NETEHTMSRI) shows a compositional bias: basic and acidic residues. The Velvet domain occupies 26–235 (GKKLTYNLKV…AEQGCRVRIR (210 aa)). The short motif at 40–45 (ERARAC) is the Nuclear localization signal element. The disordered stretch occupies residues 238–547 (VRMRRREPKP…TSGGSDDEIM (310 aa)). The span at 245 to 260 (PKPNKDYGAYDDRRIT) shows a compositional bias: basic and acidic residues. The segment covering 306-321 (HQQPSPNLAATPQSHL) has biased composition (polar residues). The segment covering 330–347 (YHAPPPPPTAHPAPPPAY) has biased composition (pro residues). Positions 386–395 (YDQSKSSLPM) are enriched in polar residues. Over residues 422–433 (PSQLHPTQQYQQ) the composition is skewed to low complexity. Residues 434–448 (PTPPPPPPAAIAPHP) show a composition bias toward pro residues. Positions 452–493 (RTPTKPSPSTFFPPTPSRLSVEVDSSNEADDAILNAIRTRRG) are PEST. The segment covering 494 to 516 (YILDEKSGATKRSRDSSDHDLKP) has biased composition (basic and acidic residues).

It belongs to the velvet family. VeA subfamily. As to quaternary structure, component of the heterotrimeric velvet complex composed of LAE1, VEA1 and VEL2; VEA1 acting as a bridging protein between LAE1 and VEL2.

It localises to the nucleus. Its subcellular location is the cytoplasm. Its function is as follows. Component of the velvet transcription factor complex that controls sexual/asexual developmental ratio in response to light, promoting sexual development in the darkness while stimulating asexual sporulation under illumination. The velvet complex hat acts as a global regulator for secondary metabolite gene expression. Regulates cleistothecial formation and hyphal growth. Acts as a positive regulator of virulence. This Ajellomyces capsulatus (Darling's disease fungus) protein is Developmental and secondary metabolism regulator VEA1.